The sequence spans 1592 residues: Laminin subunit gamma-1 (1592 aa).

The signal sequence occupies residues 1–19 (MRAPVLAVLAVLLLGTVRA). The Laminin N-terminal domain occupies 29-268 (SPQRCMPEFV…AISDFAVGGR (240 aa)). N-linked (GlcNAc...) asparagine glycans are attached at residues asparagine 43 and asparagine 117. Disulfide bonds link cysteine 269–cysteine 278, cysteine 271–cysteine 288, cysteine 290–cysteine 299, cysteine 302–cysteine 322, cysteine 325–cysteine 334, cysteine 327–cysteine 350, cysteine 353–cysteine 362, cysteine 365–cysteine 378, cysteine 381–cysteine 393, cysteine 383–cysteine 399, cysteine 401–cysteine 410, cysteine 413–cysteine 425, cysteine 428–cysteine 439, cysteine 430–cysteine 446, cysteine 448–cysteine 457, and cysteine 460–cysteine 475. 4 Laminin EGF-like domains span residues 269–324 (CKCN…ECLP), 325–380 (CNCN…PCHA), 381–427 (CQCN…GCRP), and 428–477 (CACN…GCTP). The region spanning 504–672 (SGVEGWTAQQ…AGPSAPWVEI (169 aa)) is the Laminin IV type A domain. N-linked (GlcNAc...) asparagine glycans are attached at residues asparagine 559 and asparagine 633. 24 cysteine pairs are disulfide-bonded: cysteine 707/cysteine 716, cysteine 709/cysteine 723, cysteine 725/cysteine 734, cysteine 737/cysteine 753, cysteine 756/cysteine 764, cysteine 758/cysteine 775, cysteine 778/cysteine 787, cysteine 790/cysteine 808, cysteine 811/cysteine 825, cysteine 813/cysteine 832, cysteine 835/cysteine 844, cysteine 847/cysteine 864, cysteine 867/cysteine 881, cysteine 869/cysteine 888, cysteine 890/cysteine 899, cysteine 902/cysteine 915, cysteine 918/cysteine 930, cysteine 920/cysteine 937, cysteine 939/cysteine 948, cysteine 951/cysteine 963, cysteine 966/cysteine 978, cysteine 968/cysteine 984, cysteine 986/cysteine 995, and cysteine 998/cysteine 1011. Laminin EGF-like domains follow at residues 707–755 (CTCN…DCQP), 756–810 (CPCP…PCRI), 811–866 (CECS…KCRA), 867–917 (CSCN…GCER), 918–965 (CDCH…GCKP), and 966–1013 (CDCD…GCQE). Asparagine 1005, asparagine 1041, asparagine 1048, asparagine 1090, asparagine 1144, asparagine 1158, asparagine 1188, asparagine 1206, asparagine 1253, asparagine 1363, and asparagine 1386 each carry an N-linked (GlcNAc...) asparagine glycan. The domain II and I stretch occupies residues 1013–1592 (ECPACYRLVK…CYNTPIIEKP (580 aa)). Residues 1018–1477 (YRLVKDKVNE…DEKMAEMASN (460 aa)) are a coiled coil. A compositionally biased stretch (basic and acidic residues) spans 1456–1472 (NQLKKKQAEAESDEKMA). The segment at 1456–1489 (NQLKKKQAEAESDEKMAEMASNATKDAESNANNS) is disordered. Residues 1476–1489 (SNATKDAESNANNS) show a composition bias toward polar residues. 2 N-linked (GlcNAc...) asparagine glycosylation sites follow: asparagine 1477 and asparagine 1487. Positions 1515-1579 (VGQLTVLEKT…ANLEDIKNTL (65 aa)) form a coiled coil.

Laminin is a complex glycoprotein, consisting of three different polypeptide chains (alpha, beta, gamma), which are bound to each other by disulfide bonds into a cross-shaped molecule comprising one long and three short arms with globules at each end.

It localises to the secreted. The protein resides in the extracellular space. It is found in the extracellular matrix. Its subcellular location is the basement membrane. In terms of biological role, binding to cells via a high affinity receptor, laminin is thought to mediate the attachment, migration and organization of cells into tissues during embryonic development by interacting with other extracellular matrix components. The sequence is that of Laminin subunit gamma-1 (lamc1) from Xenopus tropicalis (Western clawed frog).